The following is a 435-amino-acid chain: Serine--tRNA ligase (435 aa).

Residue T234–E236 participates in L-serine binding. Residue R265–E267 participates in ATP binding. E288 lines the L-serine pocket. Residue E352–S355 coordinates ATP. An L-serine-binding site is contributed by S388.

Belongs to the class-II aminoacyl-tRNA synthetase family. Type-1 seryl-tRNA synthetase subfamily. As to quaternary structure, homodimer. The tRNA molecule binds across the dimer.

Its subcellular location is the cytoplasm. It catalyses the reaction tRNA(Ser) + L-serine + ATP = L-seryl-tRNA(Ser) + AMP + diphosphate + H(+). The enzyme catalyses tRNA(Sec) + L-serine + ATP = L-seryl-tRNA(Sec) + AMP + diphosphate + H(+). It functions in the pathway aminoacyl-tRNA biosynthesis; selenocysteinyl-tRNA(Sec) biosynthesis; L-seryl-tRNA(Sec) from L-serine and tRNA(Sec): step 1/1. Its function is as follows. Catalyzes the attachment of serine to tRNA(Ser). Is also able to aminoacylate tRNA(Sec) with serine, to form the misacylated tRNA L-seryl-tRNA(Sec), which will be further converted into selenocysteinyl-tRNA(Sec). In Synechococcus sp. (strain JA-2-3B'a(2-13)) (Cyanobacteria bacterium Yellowstone B-Prime), this protein is Serine--tRNA ligase.